The following is a 74-amino-acid chain: UPF0346 protein SE_1114 (74 aa).

This sequence belongs to the UPF0346 family.

This chain is UPF0346 protein SE_1114, found in Staphylococcus epidermidis (strain ATCC 12228 / FDA PCI 1200).